A 752-amino-acid chain; its full sequence is MLSLQEFVQNRYNKTIAECSNEELYLALLNYSKLASSQKPVNTGKKKVYYISAEFLIGKLLSNNLINLGLYDDVKKELAAAGKDLIEVEEVELEPSLGNGGLGRLAACFIDSIATLGLNGDGVGLNYHFGLFQQVLKNNQQETIPNAWLTEQNWLVRSSRSYQVPFADFTLTSTLYDIDVTGYETATKNRLRLFDLDSVDSSIIKDGINFDKTDIARNLTLFLYPDDSDRQGELLRIFQQYFMVSNGAQLIIDEAIEKGSNLHDLADYAVVQINDTHPSMVIPELIRLLTARGIDLDEAISIVRSMTAYTNHTILAEALEKWPLEFLQEVVPHLVPIIEELDRRVKAEYKDPAVQIIDESGRVHMAHMDIHYGYSVNGVAALHTEILKNSELKAFYDLYPEKFNNKTNGITFRRWLMHANPRLSHYLDEILGDGWHHEADELEKLLSYEDKAVVKEKLESIKAHNKRKLARHLKEHQGVEINPNSIFDIQIKRLHEYKRQQMNALYVIHKYLDIKAGNIPARPITIFFGGKAAPAYTIAQDIIHLILCMSEVIANDPAVAPHLQVVMVENYNVTAASFLIPACDISEQISLASKEASGTGNMKFMLNGALTLGTMDGANVEIAELVGEENIYIFGEDSETVIDLYAKAAYKSSEFYAREAIKPLVDFIVSDAVLAAGNKERLERFYNELINKDWFMTLLDLEDYIKVKEQMLADYEDRDAWLDKVIVNISKAGFFSSDRTIAQYNEDIWHLN.

An N6-(pyridoxal phosphate)lysine modification is found at lysine 603.

The protein belongs to the glycogen phosphorylase family. Pyridoxal 5'-phosphate is required as a cofactor.

The enzyme catalyses [(1-&gt;4)-alpha-D-glucosyl](n) + phosphate = [(1-&gt;4)-alpha-D-glucosyl](n-1) + alpha-D-glucose 1-phosphate. Its function is as follows. Phosphorylase is an important allosteric enzyme in carbohydrate metabolism. Enzymes from different sources differ in their regulatory mechanisms and in their natural substrates. However, all known phosphorylases share catalytic and structural properties. The protein is Maltodextrin phosphorylase (malP) of Streptococcus pneumoniae serotype 4 (strain ATCC BAA-334 / TIGR4).